Consider the following 153-residue polypeptide: Mediator of RNA polymerase II transcription subunit 31 (153 aa).

2 disordered regions span residues 1 to 28 (MTLG…RRQA) and 125 to 153 (RDPE…GQTA).

The protein belongs to the Mediator complex subunit 31 family. In terms of assembly, component of the Mediator complex.

It is found in the nucleus. Its function is as follows. Component of the Mediator complex, a coactivator involved in the regulated transcription of nearly all RNA polymerase II-dependent genes. Mediator functions as a bridge to convey information from gene-specific regulatory proteins to the basal RNA polymerase II transcription machinery. Mediator is recruited to promoters by direct interactions with regulatory proteins and serves as a scaffold for the assembly of a functional preinitiation complex with RNA polymerase II and the general transcription factors. This is Mediator of RNA polymerase II transcription subunit 31 (SOH1) from Mycosarcoma maydis (Corn smut fungus).